The primary structure comprises 151 residues: Large ribosomal subunit protein bL9 (151 aa).

This sequence belongs to the bacterial ribosomal protein bL9 family.

Binds to the 23S rRNA. This is Large ribosomal subunit protein bL9 from Lactobacillus delbrueckii subsp. bulgaricus (strain ATCC 11842 / DSM 20081 / BCRC 10696 / JCM 1002 / NBRC 13953 / NCIMB 11778 / NCTC 12712 / WDCM 00102 / Lb 14).